The sequence spans 154 residues: Ribonuclease H (154 aa).

Residues 1 to 142 enclose the RNase H type-1 domain; sequence MLKKIDLYTD…CDELAREAAS (142 aa). Mg(2+) contacts are provided by D10, E48, D70, and D134. A disordered region spans residues 133 to 154; sequence CDELAREAASGKQLAEDTGYQP.

This sequence belongs to the RNase H family. Monomer. It depends on Mg(2+) as a cofactor.

The protein resides in the cytoplasm. The enzyme catalyses Endonucleolytic cleavage to 5'-phosphomonoester.. Functionally, endonuclease that specifically degrades the RNA of RNA-DNA hybrids. This Aeromonas hydrophila subsp. hydrophila (strain ATCC 7966 / DSM 30187 / BCRC 13018 / CCUG 14551 / JCM 1027 / KCTC 2358 / NCIMB 9240 / NCTC 8049) protein is Ribonuclease H.